We begin with the raw amino-acid sequence, 553 residues long: Efflux pump alnA (553 aa).

Positions 1–21 are enriched in basic and acidic residues; sequence MSSDDTVKQEHSCSADSEKQD. A disordered region spans residues 1-36; the sequence is MSSDDTVKQEHSCSADSEKQDSSCASDNEQPKEPQS. 13 helical membrane-spanning segments follow: residues 40–60, 85–105, 110–130, 136–156, 174–194, 202–222, 243–263, 270–290, 319–339, 355–375, 382–402, 413–433, and 522–542; these read IHGL…FLFA, WSGV…LQIF, IKWM…ICGA, MLIG…VGVM, AMGL…GAFT, WSFY…IFLL, LVGT…INFA, SEPG…VFGI, LLFV…YVIP, VRLL…GYLA, IPWY…MYTI, GYSS…HAVA, and TYIL…GMKW.

This sequence belongs to the major facilitator superfamily. TCR/Tet family.

Its subcellular location is the cell membrane. Efflux pump; part of the gene cluster that mediates the biosynthesis of asperlin, a polyketide showing anti-inflammatory, antitumor and antibiotic activities. Is probably involved in the efflux of asperlin. The protein is Efflux pump alnA of Emericella nidulans (strain FGSC A4 / ATCC 38163 / CBS 112.46 / NRRL 194 / M139) (Aspergillus nidulans).